An 87-amino-acid polypeptide reads, in one-letter code: MAHKKGQGSTQNNRDSAGRRLGVKKFGGEFVRAGNIIIRQRGTKVHPGNNVGLGKDHTIYALIDGYVKFEIKDKQRKKVSVYPIENN.

The tract at residues 1 to 21 is disordered; sequence MAHKKGQGSTQNNRDSAGRRL.

The protein belongs to the bacterial ribosomal protein bL27 family.

The polypeptide is Large ribosomal subunit protein bL27 (Nautilia profundicola (strain ATCC BAA-1463 / DSM 18972 / AmH)).